The sequence spans 237 residues: Riboflavin kinase (237 aa).

Residues methionine 1–valine 101 are unknown. The tract at residues leucine 102–lysine 237 is riboflavin kinase. Glycine 111–glutamine 116 contributes to the CDP binding site. Threonine 140 and asparagine 142 together coordinate Mg(2+). FMN contacts are provided by threonine 197 and glutamate 205. Position 210–213 (valine 210–arginine 213) interacts with CDP.

The protein belongs to the archaeal riboflavin kinase family. It depends on Mg(2+) as a cofactor.

It carries out the reaction riboflavin + CTP = CDP + FMN + H(+). The protein operates within cofactor biosynthesis; FMN biosynthesis; FMN from riboflavin (CTP route): step 1/1. Catalyzes the CTP-dependent phosphorylation of riboflavin (vitamin B2) to form flavin mononucleotide (FMN). The chain is Riboflavin kinase (ribK) from Methanosarcina acetivorans (strain ATCC 35395 / DSM 2834 / JCM 12185 / C2A).